The following is an 810-amino-acid chain: DNA replication licensing factor mcm-6 (810 aa).

An MCM domain is found at I346 to I553. 6 residues coordinate ATP: S400, T401, A402, K403, S404, and N505. An Arginine finger motif is present at residues S529–D532. ADP contacts are provided by R622 and E625. The tract at residues K685 to K705 is disordered.

Belongs to the MCM family. As to quaternary structure, component of the mcm2-7 complex. The complex forms a toroidal hexameric ring with the proposed subunit order mcm2-mcm6-mcm4-mcm7-mcm3-mcm5 (By simililarity).

The protein localises to the nucleus. It carries out the reaction ATP + H2O = ADP + phosphate + H(+). Its function is as follows. Acts as a component of the MCM2-7 complex (MCM complex) which is the replicative helicase essential for 'once per cell cycle' DNA replication initiation and elongation in eukaryotic cells. Core component of CDC45-MCM-GINS (CMG) helicase, the molecular machine that unwinds template DNA during replication, and around which the replisome is built. The active ATPase sites in the MCM2-7 ring are formed through the interaction surfaces of two neighboring subunits such that a critical structure of a conserved arginine finger motif is provided in trans relative to the ATP-binding site of the Walker A box of the adjacent subunit. The six ATPase active sites, however, are likely to contribute differentially to the complex helicase activity. In Caenorhabditis briggsae, this protein is DNA replication licensing factor mcm-6.